Reading from the N-terminus, the 507-residue chain is Cysteine--tRNA ligase (507 aa).

C29 contributes to the Zn(2+) binding site. Positions 31–41 match the 'HIGH' region motif; the sequence is PTVYDVPHIGN. Positions 207, 232, and 236 each coordinate Zn(2+). The 'KMSKS' region signature appears at 265 to 269; that stretch reads KMSKS. K268 is an ATP binding site.

The protein belongs to the class-I aminoacyl-tRNA synthetase family. In terms of assembly, monomer. Zn(2+) serves as cofactor.

The protein resides in the cytoplasm. It carries out the reaction tRNA(Cys) + L-cysteine + ATP = L-cysteinyl-tRNA(Cys) + AMP + diphosphate. In Neorickettsia sennetsu (strain ATCC VR-367 / Miyayama) (Ehrlichia sennetsu), this protein is Cysteine--tRNA ligase.